A 344-amino-acid chain; its full sequence is MKKIVTLAGDGIGPEIMAAGLEVFDAVAQKINFDYEIEAKAFGGAGIDASGHPLPDDTLAAAKTADAILLAAIGSPQYDKAPVRPEQGLLAIRKELNLFANIRPVRIFDALRHLSPLKAERIAGVDFVVVRELTGGIYFGQHTLTENSACDINEYSASEIRRIMRKAFAIARGRSKKVTSIDKQNVLATSKLWRQIAEEVAKEYSDVTLEHQLVDSAAMVMITNPACFDVVVTENLFGDILSDESSVLPGTLGVMPSASHSESGPSLYEPIHGSAPDIAGKGIANPISMILSVAMMLRDSFGETAGAEMIEHAVNKTLTQGILTRDLGGLANTKQMTAAIIANL.

Substrate-binding residues include Arg-93, Arg-103, Arg-131, and Asp-215. The Mg(2+) site is built by Asp-215, Asp-239, and Asp-243. 273–285 (GSAPDIAGKGIAN) contacts NAD(+).

Belongs to the isocitrate and isopropylmalate dehydrogenases family. LeuB type 1 subfamily. In terms of assembly, homodimer. Mg(2+) serves as cofactor. The cofactor is Mn(2+).

The protein localises to the cytoplasm. It catalyses the reaction (2R,3S)-3-isopropylmalate + NAD(+) = 4-methyl-2-oxopentanoate + CO2 + NADH. The protein operates within amino-acid biosynthesis; L-leucine biosynthesis; L-leucine from 3-methyl-2-oxobutanoate: step 3/4. In terms of biological role, catalyzes the oxidation of 3-carboxy-2-hydroxy-4-methylpentanoate (3-isopropylmalate) to 3-carboxy-4-methyl-2-oxopentanoate. The product decarboxylates to 4-methyl-2 oxopentanoate. The chain is 3-isopropylmalate dehydrogenase from Streptococcus mutans serotype c (strain ATCC 700610 / UA159).